We begin with the raw amino-acid sequence, 273 residues long: Short-chain dehydrogenase fogB (273 aa).

Positions 16, 66, 128, 174, 178, 207, and 209 each coordinate NADP(+). Residue Y174 is the Proton donor of the active site. K178 serves as the catalytic Lowers pKa of active site Tyr.

This sequence belongs to the short-chain dehydrogenases/reductases (SDR) family.

Its function is as follows. Short-chain dehydrogenase; part of the gene cluster that mediates the biosynthesis of flavoglaucin and congeners (including aspergin, dihydroauroglaucin and auroglaucin), prenylated salicylaldehyde derivatives carrying a saturated or an unsaturated C-7 side chain. The PKS fogA releases the carboxylic acid (8E,10E,12E)-3,5,7-trihydroxytetradeca-8,10,12-trienoic acid as its product, as well as derivatives with one and two double bonds. FogA is indeed able to reduce the initial triketide, thus being at least partially responsible for the differently saturated heptyl side chains of flavoglaucin congeners. The oxidoreductases fogB, fogC and fogD modify the nascent polyketide in fogA-bound form and, together, fogA, fogB, fogC and fogD are necessary for the formation of the aromatic core and the cyclized PKS products are released as salicyl alcohols. In particular, fogB is responsible for oxidation of a hydroxyl group or reduction of remaining double bond(s) at the C-7 residue whereas fogD is probably involved in the reductive release of the modified PKS products. The cytochrome P450 monooxygenase fogE is then responsible for the hydroxylation at C-3 of the benzene ring. The fogE products are substrates of the prenyltransferase fogH and the prenylated benzyl alcohols are subsequently oxidized by the fogF to produce the final aryl aldehydes flavoglaucin and congeners. The short-chain dehydrogenase fogG does not seem to be involved in the biosynthesis of the prenylated salicylaldehyde derivatives. The sequence is that of Short-chain dehydrogenase fogB from Aspergillus ruber (strain CBS 135680).